The primary structure comprises 216 residues: Small ribosomal subunit protein uS3 (216 aa).

In terms of domain architecture, KH type-2 spans 38–108 (LREFVKKKLH…DLAIDIQEVK (71 aa)).

The protein belongs to the universal ribosomal protein uS3 family. In terms of assembly, part of the 30S ribosomal subunit. Forms a tight complex with proteins S10 and S14.

In terms of biological role, binds the lower part of the 30S subunit head. Binds mRNA in the 70S ribosome, positioning it for translation. This Desulfosudis oleivorans (strain DSM 6200 / JCM 39069 / Hxd3) (Desulfococcus oleovorans) protein is Small ribosomal subunit protein uS3.